Consider the following 91-residue polypeptide: MSRSIKKGPFVDAHLTKKVEAAVAGKDKKPIKTWSRRSTILPEFIGLTIAVHNGRQHVPVYINENMVGHKLGEFALTRTFKGHAADKKAKR.

The protein belongs to the universal ribosomal protein uS19 family.

In terms of biological role, protein S19 forms a complex with S13 that binds strongly to the 16S ribosomal RNA. This Bordetella avium (strain 197N) protein is Small ribosomal subunit protein uS19.